A 444-amino-acid chain; its full sequence is MRNIIYFILSLLFSVTSYALETINIEHGRADPTPIAVNKFYADNSAADVLGHDMVKVISNDLKLSGLFRPISAASFIEEKTGIEYKPLFAAWRQINASLLVNGEVKKLESGKFQISFILWDTLLEKQLVGEILEVPKNLWRRAAHKIADKIYEKITGDAGYFDTKIVYVSESSSLPKIKRIALMDYDGANNKYLTNGKSLVLTPRFARSADKIFYVSYATKRRVLVYEKDLKTGKESVVGDFPGISFAPRFSPDGRKAVMSIAKNGSTHIYEIDLATKRLHKLTDGFGINTSPSYSPDGTKIVYNSDRNGVPQLYIMNSDGSDVQRISFGGGSYAAPSWSPRGDYIAFTKITKGDGGKTFNIGIMKACPQDNKNSERIITSGYLVESPCWSPNGRVIMFAKGWPSSSKAPGKNKIFAIDLTGHNEREIMTPADASDPEWSGVLN.

The N-terminal stretch at 1 to 19 (MRNIIYFILSLLFSVTSYA) is a signal peptide.

Belongs to the TolB family. As to quaternary structure, the Tol-Pal system is composed of five core proteins: the inner membrane proteins TolA, TolQ and TolR, the periplasmic protein TolB and the outer membrane protein Pal. They form a network linking the inner and outer membranes and the peptidoglycan layer.

It localises to the periplasm. In terms of biological role, part of the Tol-Pal system, which plays a role in outer membrane invagination during cell division and is important for maintaining outer membrane integrity. The polypeptide is Tol-Pal system protein TolB (Rickettsia rickettsii (strain Sheila Smith)).